We begin with the raw amino-acid sequence, 311 residues long: Transmembrane protein 177 (311 aa).

Residues Met-1–Thr-17 lie on the Mitochondrial matrix side of the membrane. Residues Gly-18–Pro-38 traverse the membrane as a helical segment. Over Asp-39 to Thr-166 the chain is Mitochondrial intermembrane. Residues Ala-167–Ala-187 traverse the membrane as a helical segment. The Mitochondrial matrix portion of the chain corresponds to Lys-188–Pro-197. A helical membrane pass occupies residues Met-198–Phe-218. Residues Ser-219–Ser-311 are Mitochondrial intermembrane-facing.

The protein belongs to the TMEM177 family. Found in a complex with COX20, COA6, MT-CO2/COX2, COX18, SCO1 and SCO2. Interacts with COX20. Interacts with COX1, MT-CO2/COX2, SCO1 and SCO2 in a COX20-dependent manner.

The protein resides in the mitochondrion inner membrane. In terms of biological role, plays a role in the early steps of cytochrome c oxidase subunit II (MT-CO2/COX2) maturation and is required for the stabilization of COX20 and the newly synthesized MT-CO2/COX2 protein. The chain is Transmembrane protein 177 (TMEM177) from Homo sapiens (Human).